The sequence spans 484 residues: Serine protease HTR4 (484 aa).

The first 28 residues, 1 to 28, serve as a signal peptide directing secretion; sequence MARPLQRPAGLGPFVLLWLLLPAPSGRG. One can recognise an IGFBP N-terminal domain in the interval 36–114; that stretch reads PVPRCPAACE…GRPLGTCGCP (79 aa). 8 disulfide bridges follow: Cys40–Cys66, Cys44–Cys68, Cys49–Cys69, Cys55–Cys72, Cys80–Cys94, Cys88–Cys111, Cys113–Cys132, and Cys121–Cys157. One can recognise a Kazal-like domain in the interval 105–159; the sequence is GRPLGTCGCPAAGATVCGSDGRTYRSLCALRAENRAARLRGALPAVPVQKGDCGD. The serine protease stretch occupies residues 209-369; sequence ASGFIVSEDG…IPSDRIRQFL (161 aa). Residues His225, Asp255, and Ser333 each act as charge relay system in the active site. A PDZ domain is found at 390 to 472; it reads LRMLPLTMNL…LSLLVRRKSQ (83 aa).

This sequence belongs to the peptidase S1C family.

The protein resides in the secreted. In terms of biological role, serine protease. The chain is Serine protease HTR4 (HTRA4) from Bos taurus (Bovine).